The sequence spans 167 residues: SsrA-binding protein (167 aa).

The segment covering 139–158 (QNHDKRDAAKDRDWQRDKQR) has biased composition (basic and acidic residues). The tract at residues 139–167 (QNHDKRDAAKDRDWQRDKQRVMRRHNRDA) is disordered.

This sequence belongs to the SmpB family.

Its subcellular location is the cytoplasm. Required for rescue of stalled ribosomes mediated by trans-translation. Binds to transfer-messenger RNA (tmRNA), required for stable association of tmRNA with ribosomes. tmRNA and SmpB together mimic tRNA shape, replacing the anticodon stem-loop with SmpB. tmRNA is encoded by the ssrA gene; the 2 termini fold to resemble tRNA(Ala) and it encodes a 'tag peptide', a short internal open reading frame. During trans-translation Ala-aminoacylated tmRNA acts like a tRNA, entering the A-site of stalled ribosomes, displacing the stalled mRNA. The ribosome then switches to translate the ORF on the tmRNA; the nascent peptide is terminated with the 'tag peptide' encoded by the tmRNA and targeted for degradation. The ribosome is freed to recommence translation, which seems to be the essential function of trans-translation. The polypeptide is SsrA-binding protein (Xanthomonas axonopodis pv. citri (strain 306)).